Here is a 314-residue protein sequence, read N- to C-terminus: tRNA pseudouridine synthase B (314 aa).

His-43 is a binding site for substrate. The active-site Nucleophile is Asp-48. Positions 76, 179, and 200 each coordinate substrate.

Belongs to the pseudouridine synthase TruB family. Type 1 subfamily.

It carries out the reaction uridine(55) in tRNA = pseudouridine(55) in tRNA. Responsible for synthesis of pseudouridine from uracil-55 in the psi GC loop of transfer RNAs. The chain is tRNA pseudouridine synthase B from Salmonella typhi.